Reading from the N-terminus, the 110-residue chain is UPF0122 protein SE_0911 (110 aa).

The protein belongs to the UPF0122 family.

In terms of biological role, might take part in the signal recognition particle (SRP) pathway. This is inferred from the conservation of its genetic proximity to ftsY/ffh. May be a regulatory protein. The polypeptide is UPF0122 protein SE_0911 (Staphylococcus epidermidis (strain ATCC 12228 / FDA PCI 1200)).